We begin with the raw amino-acid sequence, 63 residues long: Keratin-associated protein 19-7 (63 aa).

This sequence belongs to the KRTAP type 19 family. In terms of assembly, interacts with hair keratins.

Its function is as follows. In the hair cortex, hair keratin intermediate filaments are embedded in an interfilamentous matrix, consisting of hair keratin-associated proteins (KRTAP), which are essential for the formation of a rigid and resistant hair shaft through their extensive disulfide bond cross-linking with abundant cysteine residues of hair keratins. The matrix proteins include the high-sulfur and high-glycine-tyrosine keratins. The protein is Keratin-associated protein 19-7 (KRTAP19-7) of Homo sapiens (Human).